The chain runs to 349 residues: tRNA pseudouridine synthase D (349 aa).

A substrate-binding site is contributed by Phe27. Asp80 acts as the Nucleophile in catalysis. Asn129 lines the substrate pocket. The region spanning 155 to 303 (GVPNYFGAQR…VEASRRAMLL (149 aa)) is the TRUD domain. Phe329 contributes to the substrate binding site.

This sequence belongs to the pseudouridine synthase TruD family.

It catalyses the reaction uridine(13) in tRNA = pseudouridine(13) in tRNA. In terms of biological role, responsible for synthesis of pseudouridine from uracil-13 in transfer RNAs. This chain is tRNA pseudouridine synthase D, found in Salmonella newport (strain SL254).